Here is a 179-residue protein sequence, read N- to C-terminus: NAD(P)H-quinone oxidoreductase subunit J (179 aa).

The protein belongs to the complex I 30 kDa subunit family. In terms of assembly, NDH-1 can be composed of about 15 different subunits; different subcomplexes with different compositions have been identified which probably have different functions. In at one experiment the initiator methionine has been seen to be kept and removed.

The protein localises to the cellular thylakoid membrane. It catalyses the reaction a plastoquinone + NADH + (n+1) H(+)(in) = a plastoquinol + NAD(+) + n H(+)(out). It carries out the reaction a plastoquinone + NADPH + (n+1) H(+)(in) = a plastoquinol + NADP(+) + n H(+)(out). Its function is as follows. NDH-1 shuttles electrons from an unknown electron donor, via FMN and iron-sulfur (Fe-S) centers, to quinones in the respiratory and/or the photosynthetic chain. The immediate electron acceptor for the enzyme in this species is believed to be plastoquinone. Couples the redox reaction to proton translocation, and thus conserves the redox energy in a proton gradient. Cyanobacterial NDH-1 also plays a role in inorganic carbon-concentration. The polypeptide is NAD(P)H-quinone oxidoreductase subunit J (Synechocystis sp. (strain ATCC 27184 / PCC 6803 / Kazusa)).